Consider the following 200-residue polypeptide: Putative HTH-type transcriptional regulator YhjB (200 aa).

Residues 135–200 (DIKDLKSLSA…QAAMMLNISS (66 aa)) form the HTH luxR-type domain. Positions 159–178 (NKEIGRALNISTGTVKAHLE) form a DNA-binding region, H-T-H motif.

This chain is Putative HTH-type transcriptional regulator YhjB (yhjB), found in Escherichia coli (strain K12).